The chain runs to 336 residues: NADH-quinone oxidoreductase subunit H (336 aa).

The next 8 helical transmembrane spans lie at 4–24 (YILW…LVVA), 75–95 (YLFF…WAVI), 108–128 (LGLL…VIAG), 154–174 (MGFA…TGII), 181–201 (IWHW…IAGI), 233–253 (LFFL…SIMF), 272–292 (FVPG…MFLW), and 308–328 (LGWK…ACMV).

Belongs to the complex I subunit 1 family. As to quaternary structure, NDH-1 is composed of 14 different subunits. Subunits NuoA, H, J, K, L, M, N constitute the membrane sector of the complex.

The protein localises to the cell inner membrane. It carries out the reaction a quinone + NADH + 5 H(+)(in) = a quinol + NAD(+) + 4 H(+)(out). In terms of biological role, NDH-1 shuttles electrons from NADH, via FMN and iron-sulfur (Fe-S) centers, to quinones in the respiratory chain. The immediate electron acceptor for the enzyme in this species is believed to be ubiquinone. Couples the redox reaction to proton translocation (for every two electrons transferred, four hydrogen ions are translocated across the cytoplasmic membrane), and thus conserves the redox energy in a proton gradient. This subunit may bind ubiquinone. The protein is NADH-quinone oxidoreductase subunit H of Francisella tularensis subsp. tularensis (strain FSC 198).